The following is a 1683-amino-acid chain: A-kinase anchor protein SPHKAP (1683 aa).

2 stretches are compositionally biased toward polar residues: residues 1-14 (MDVNSRLSVQSNVE) and 289-301 (AENTALQSLNPSA). Disordered regions lie at residues 1 to 30 (MDVNSRLSVQSNVESPLMPEDSEPQQITSS), 275 to 320 (RMPS…ATNY), and 582 to 601 (LLPTPGASEERSSIGSLVTE). Residues 910–927 (FAEELAETVVSMATEIAA) are PKA-RII subunit binding domain. A disordered region spans residues 960–983 (LKRKKENSGTGSTVRKHKPPRLSE). A phosphoserine mark is found at Ser1006, Ser1066, Ser1088, Ser1101, Ser1102, Ser1105, Ser1240, and Ser1269. Disordered regions lie at residues 1359-1387 (VTEGNCSPVSSPSKMAPVKKPSGFDPTRE) and 1415-1518 (ETDQ…DTSS). Residues 1362–1371 (GNCSPVSSPS) are compositionally biased toward polar residues. Basic and acidic residues predominate over residues 1469-1490 (LETREELEVDVLKEDITLDESR). The span at 1492 to 1504 (PPSSSEESTGSWS) shows a compositional bias: low complexity.

Belongs to the AKAP110 family. As to quaternary structure, interacts (via the PKA-RII subunit binding domain) with the RI subunit of PKA. Interacts with SPHK1; the interaction greatly reduces SPHK1 activity. As to expression, abundant in heart ventricle (at protein level).

It localises to the cytoplasm. Its function is as follows. Anchoring protein that binds preferentially to the type I regulatory subunit of c-AMP-dependent protein kinase (PKA type I) and targets it to distinct subcellular compartments. May act as a converging factor linking cAMP and sphingosine signaling pathways. Plays a regulatory role in the modulation of SPHK1. The sequence is that of A-kinase anchor protein SPHKAP (Sphkap) from Rattus norvegicus (Rat).